Consider the following 238-residue polypeptide: Pyruvate formate-lyase-activating enzyme (238 aa).

The Radical SAM core domain occupies 15–236 (VDGPGIRTVV…KKLEKYLKEL (222 aa)). Residues C29, C33, and C36 each contribute to the [4Fe-4S] cluster site. S-adenosyl-L-methionine-binding positions include 35-37 (YCH), G78, 126-128 (DIK), and H199.

It belongs to the organic radical-activating enzymes family. It depends on [4Fe-4S] cluster as a cofactor.

Its subcellular location is the cytoplasm. It catalyses the reaction glycyl-[formate C-acetyltransferase] + reduced [flavodoxin] + S-adenosyl-L-methionine = glycin-2-yl radical-[formate C-acetyltransferase] + semiquinone [flavodoxin] + 5'-deoxyadenosine + L-methionine + H(+). Functionally, activation of pyruvate formate-lyase under anaerobic conditions by generation of an organic free radical, using S-adenosylmethionine and reduced flavodoxin as cosubstrates to produce 5'-deoxy-adenosine. The chain is Pyruvate formate-lyase-activating enzyme (act) from Clostridium pasteurianum.